Consider the following 303-residue polypeptide: 2-dehydropantoate 2-reductase (303 aa).

NADP(+)-binding positions include 7–12 (GCGALG), Asn98, and Ala122. Position 98 (Asn98) interacts with substrate. The Proton donor role is filled by Lys176. Positions 180, 184, 194, and 244 each coordinate substrate. Residue Glu256 participates in NADP(+) binding.

It belongs to the ketopantoate reductase family.

It localises to the cytoplasm. It catalyses the reaction (R)-pantoate + NADP(+) = 2-dehydropantoate + NADPH + H(+). The protein operates within cofactor biosynthesis; (R)-pantothenate biosynthesis; (R)-pantoate from 3-methyl-2-oxobutanoate: step 2/2. In terms of biological role, catalyzes the NADPH-dependent reduction of ketopantoate into pantoic acid. In Yersinia pestis, this protein is 2-dehydropantoate 2-reductase (panE).